The primary structure comprises 100 residues: Large ribosomal subunit protein uL23 (100 aa).

Belongs to the universal ribosomal protein uL23 family. As to quaternary structure, part of the 50S ribosomal subunit. Contacts protein L29, and trigger factor when it is bound to the ribosome.

In terms of biological role, one of the early assembly proteins it binds 23S rRNA. One of the proteins that surrounds the polypeptide exit tunnel on the outside of the ribosome. Forms the main docking site for trigger factor binding to the ribosome. In Sodalis glossinidius (strain morsitans), this protein is Large ribosomal subunit protein uL23.